The primary structure comprises 161 residues: Small ribosomal subunit protein uS9 (161 aa).

Disordered regions lie at residues 1–28 (MAQI…PKAP) and 142–161 (KERK…FSKR).

It belongs to the universal ribosomal protein uS9 family.

The chain is Small ribosomal subunit protein uS9 from Clavibacter sepedonicus (Clavibacter michiganensis subsp. sepedonicus).